The primary structure comprises 957 residues: Glycine dehydrogenase (decarboxylating) (957 aa).

At K708 the chain carries N6-(pyridoxal phosphate)lysine.

The protein belongs to the GcvP family. The glycine cleavage system is composed of four proteins: P, T, L and H. Pyridoxal 5'-phosphate is required as a cofactor.

It carries out the reaction N(6)-[(R)-lipoyl]-L-lysyl-[glycine-cleavage complex H protein] + glycine + H(+) = N(6)-[(R)-S(8)-aminomethyldihydrolipoyl]-L-lysyl-[glycine-cleavage complex H protein] + CO2. In terms of biological role, the glycine cleavage system catalyzes the degradation of glycine. The P protein binds the alpha-amino group of glycine through its pyridoxal phosphate cofactor; CO(2) is released and the remaining methylamine moiety is then transferred to the lipoamide cofactor of the H protein. The polypeptide is Glycine dehydrogenase (decarboxylating) (Shigella flexneri).